A 919-amino-acid chain; its full sequence is Plasma membrane ATPase 1 (919 aa).

The span at 1 to 16 (MADNAGEYHDAEKHAP) shows a compositional bias: basic and acidic residues. The tract at residues 1–73 (MADNAGEYHD…APAAGEAKAV (73 aa)) is disordered. The Cytoplasmic segment spans residues 1–113 (MADNAGEYHD…KEELENPFLK (113 aa)). Positions 34–63 (QDDEPDDDIDALIEELFSEDVQEEQEDNDD) are enriched in acidic residues. Ser-89 is modified (phosphoserine). A helical membrane pass occupies residues 114 to 134 (FIMFFVGPIQFVMEMAAALAA). Residues 135 to 138 (GLRD) lie on the Extracellular side of the membrane. A helical transmembrane segment spans residues 139–158 (WVDFGVICALLMLNAVVGFV). At 159 to 289 (QEYQAGSIVD…GTGHFTEVLN (131 aa)) the chain is on the cytoplasmic side. A helical transmembrane segment spans residues 290–311 (GIGTILLVLVLLTLFCIYTAAF). The Extracellular segment spans residues 312–322 (YRSVRLARLLE). Residues 323-345 (YTLAITIIGVPVGLPAVVTTTMA) traverse the membrane as a helical segment. Topologically, residues 346–717 (VGAAYLAEKQ…LIIRNQLLNL (372 aa)) are cytoplasmic. The 4-aspartylphosphate intermediate role is filled by Asp-376. The residue at position 494 (Ser-494) is a Phosphoserine. Mg(2+)-binding residues include Asp-632 and Asp-636. A helical membrane pass occupies residues 718–736 (ELVVFIAIFADVATLAIAY). Residues 737–752 (DNAPYSMKPVKWNLPR) are Extracellular-facing. Residues 753–772 (LWGLSTVIGIVLAIGTWITN) traverse the membrane as a helical segment. The Cytoplasmic segment spans residues 773-824 (TTMIAQGQNRGIVQNFGVQDEVLFLEISLTENWLIFVTRCNGPFWSSIPSWQ). The chain crosses the membrane as a helical span at residues 825 to 845 (LSGAVLAVDILATMFCIFGWF). Residues 846–858 (KGGHQTSIVAVLR) lie on the Extracellular side of the membrane. The chain crosses the membrane as a helical span at residues 859 to 875 (IWMYSFGIFCIMAGTYY). The Cytoplasmic portion of the chain corresponds to 876–919 (ILSESAGFDRMMNGKPKESRNQRSIEDLVVALQRTSTRHEKGDA). Ser-899 carries the post-translational modification Phosphoserine.

This sequence belongs to the cation transport ATPase (P-type) (TC 3.A.3) family. Type IIIA subfamily.

The protein localises to the cell membrane. The enzyme catalyses ATP + H2O + H(+)(in) = ADP + phosphate + 2 H(+)(out). Its function is as follows. The plasma membrane ATPase of plants and fungi is a hydrogen ion pump. The proton gradient it generates drives the active transport of nutrients by H(+)-symport. The resulting external acidification and/or internal alkinization may mediate growth responses. This Schizosaccharomyces pombe (strain 972 / ATCC 24843) (Fission yeast) protein is Plasma membrane ATPase 1 (pma1).